An 880-amino-acid polypeptide reads, in one-letter code: Leucine--tRNA ligase (880 aa).

Positions 46-56 match the 'HIGH' region motif; that stretch reads PYPSGALHMGH. A 'KMSKS' region motif is present at residues 638–642; it reads KMSKS. Lysine 641 contacts ATP.

Belongs to the class-I aminoacyl-tRNA synthetase family.

Its subcellular location is the cytoplasm. The catalysed reaction is tRNA(Leu) + L-leucine + ATP = L-leucyl-tRNA(Leu) + AMP + diphosphate. This chain is Leucine--tRNA ligase, found in Stenotrophomonas maltophilia (strain K279a).